A 110-amino-acid chain; its full sequence is Glycine-rich selenoprotein (110 aa).

At 1 to 20 (MVYIDHNGRVWEKRPWDWRR) the chain is on the lumenal side. Residues 21 to 41 (IVELFVGIWFAIKQLFLTFLA) form a helical; Signal-anchor for type III membrane protein membrane-spanning segment. Residues 42–110 (PFTGNNNQAN…CNMPAGGGUG (69 aa)) lie on the Cytoplasmic side of the membrane. A disordered region spans residues 51–110 (NPRRGNGWGGGGGWGGGGGGGGGGGGGRPGSGSGGLRPNRRIGRIQPTMSCNMPAGGGUG). The span at 56 to 85 (NGWGGGGGWGGGGGGGGGGGGGRPGSGSGG) shows a compositional bias: gly residues. Position 109 (selenocysteine 109) is a non-standard amino acid, selenocysteine.

Its subcellular location is the golgi apparatus membrane. Its function is as follows. Plays a role in the life span. May be involved in regulating the redox state of the cell and possesses anticarcinogenic properties. This chain is Glycine-rich selenoprotein (SelG), found in Drosophila melanogaster (Fruit fly).